An 878-amino-acid chain; its full sequence is Protein daughter of sevenless (878 aa).

The PH domain maps to 3–113 (RTFYEGWLIK…WVNCICQVCH (111 aa)). The segment at 132–176 (ENRTQHTSSSGGLSNSTQNTTTTSLHSSAGTTAPQASVPNAGGSA) is disordered. Low complexity predominate over residues 136 to 159 (QHTSSSGGLSNSTQNTTTTSLHSS). The span at 160 to 169 (AGTTAPQASV) shows a compositional bias: polar residues. The stretch at 246-275 (ALIQAQAAAAAAEQLQQQQQQAARLAVSAN) forms a coiled coil. The interval 391 to 437 (NNNASKQRSDSDSESVFTDDDEWAHPLPLRENVDRSTRPSDSSIENE) is disordered. S399 is modified (phosphoserine). T481 carries the phosphothreonine modification. Interaction with DRK regions lie at residues 638–650 (DCPP…KPKV) and 690–702 (GPPS…KPNA). 2 disordered regions span residues 686 to 721 (QQPI…SSGA) and 749 to 773 (LPRQ…RTAS). 2 stretches are compositionally biased toward polar residues: residues 707–718 (NSATMSPATRRS) and 760–770 (SPGSMSVQHQR). T771 carries the phosphothreonine modification. A phosphotyrosine mark is found at Y801 and Y854.

As to quaternary structure, interacts with DRK. Phosphorylated on Tyr-801 and Tyr-854 in response to sevenless activation, which initiates the recruitment of the phosphatase CSW.

It is found in the cytoplasm. The protein localises to the membrane. In terms of biological role, essential component for signaling from various receptor tyrosine kinases such as Sevenless, TORSO and DER. Required for photoreceptor cell and wing development. In Drosophila melanogaster (Fruit fly), this protein is Protein daughter of sevenless (dos).